A 618-amino-acid polypeptide reads, in one-letter code: MKGIVSWAVVSAALVLSATESLAFANVSSFEKRTTTGNGWDLDGKSYDYVIVGGGTAGLVLANRLSANQGTTVAVIEAGNSGYDDNDKFVVPDANLYNSAVNTQYDWQFHTSSQKHMNNRRASWPRGKVLGGSSAVNGLYYVRPSETEVNVWSKLAGGSGRWSWNSLLSGMKKSEHFRGPVKSVQNQLQIQYNAGSHGSNGPIGTTWPAVTYDPVERFIKTADSMSGAINNDPYNGNNHGTYVALSSIDKTNWQRSFSRNGYLDPISKRSNLHVLTGHTVTGIIFDRSGKNAQATGVHYAASSNEASHTVHANKEVIISGGAINSPQILQLSGIGDKNLLNGLGIDVVVDLPGVGENLQDHVSAGMSFKPKNKKDAGPTSVTGDAKADSYVNSAVSYTSLGKLFNNKDSILGKIQARAKQIADSHNVSPAVKQGQSKAYNALADTIFPSKVSPVEILGNVMFGSISIQAALQHPLSRGSIKITSKDPFAYPKINPNYFAENLDLVLLREGFKLIREMSQQSPLKDVIDFETVPGDKVQTNEDWENWIRSAAGTEYHPSSTCAMLPRGDGGVVDENLKVYGTSNLRVVDASVTPIAMSCHLESVVYGLAEVAADIILGN.

The first 23 residues, 1–23, serve as a signal peptide directing secretion; that stretch reads MKGIVSWAVVSAALVLSATESLA. The FAD site is built by V129 and V280. H556 functions as the Proton donor in the catalytic mechanism. H599 serves as the catalytic Proton acceptor.

This sequence belongs to the GMC oxidoreductase family. Monomer. FAD serves as cofactor.

Its subcellular location is the secreted. This Malassezia sympodialis (strain ATCC 42132) (Atopic eczema-associated yeast) protein is GMC oxidoreductase family protein Mala s 12.